The primary structure comprises 610 residues: uncharacterized protein (610 aa).

Polar residues predominate over residues 1–28 (MDSPSTSESPLKKNTIQDFGESNMTESP). Residues 1 to 36 (MDSPSTSESPLKKNTIQDFGESNMTESPQSKEEIDE) are disordered. An RING-type zinc finger spans residues 41–82 (CSVCKNEIIDTTSLSDCCHEFCYDCIVGWLTKGSGPFCPMCK). Disordered stretches follow at residues 390–411 (YRGQ…FRPA) and 431–515 (TSSA…SADR). Residues 432–447 (SSAGAGSARSRGSDSV) are compositionally biased toward low complexity. 2 stretches are compositionally biased toward acidic residues: residues 448–470 (VEID…EDSD) and 478–487 (SEEDSDEEIQ).

This is an uncharacterized protein from Caenorhabditis elegans.